A 289-amino-acid polypeptide reads, in one-letter code: Splicing factor C9orf78 homolog (289 aa).

A compositionally biased stretch (basic residues) spans 1-12 (MPVVRKIFRRRR). 2 disordered regions span residues 1 to 27 (MPVV…SEEV) and 86 to 109 (GKDK…TNRR). An interaction with SNRNP200 region spans residues 5–58 (RKIFRRRRGDSESEEDEQDSEEVRLKLEETREVQNLRKRPNGVSAVALLVGEKV). S15 and S17 each carry phosphoserine. Y147 is subject to Phosphotyrosine. A compositionally biased stretch (basic and acidic residues) spans 232–283 (LNAPIRRNKEEPKARPLRVGDTEKPEPERSPPNRKRPANEKATDDYHYEKFK). Residues 232-289 (LNAPIRRNKEEPKARPLRVGDTEKPEPERSPPNRKRPANEKATDDYHYEKFKKMNRRY) are disordered. A Phosphothreonine modification is found at T253. S261 is subject to Phosphoserine.

Belongs to the TLS1 family. As to quaternary structure, component of the spliceosome. Interacts with SNRNP200; the interaction is direct. Interacts with PRPF8.

Its subcellular location is the nucleus. It localises to the chromosome. The protein localises to the centromere. In terms of biological role, plays a role in pre-mRNA splicing by promoting usage of the upstream 3'-splice site at alternative NAGNAG splice sites; these are sites featuring alternative acceptor motifs separated by only a few nucleotides. May also modulate exon inclusion events. Plays a role in spliceosomal remodeling by displacing WBP4 from SNRNP200 and may act to inhibit SNRNP200 helicase activity. Binds U5 snRNA. Required for proper chromosome segregation. Not required for splicing of shelterin components. This chain is Splicing factor C9orf78 homolog, found in Pongo abelii (Sumatran orangutan).